A 255-amino-acid polypeptide reads, in one-letter code: MVALRLIPCLDVANGRVVKGVNFVNLRDSGDPVELACKYSEAGADELVFLDIRASVENRKTLVDLVSRTAKSVKIPFTVGGGINSINSINDLLRAGADKVSLNSSAVKNPDIISKSSTNFGTQCIVIAIDARKKITKYNEWEVYVKGGRENTGLDVISWAKKVEELGAGEILLTSMDGDGTQNGYDLLLTQTVANAVNIPVIASGGAGSVEDIYDVFTKGKASAALLASLLHDKKLTIDEIKSFLIEKKLPIRPN.

Residues aspartate 11 and aspartate 130 contribute to the active site.

The protein belongs to the HisA/HisF family. Heterodimer of HisH and HisF.

Its subcellular location is the cytoplasm. The catalysed reaction is 5-[(5-phospho-1-deoxy-D-ribulos-1-ylimino)methylamino]-1-(5-phospho-beta-D-ribosyl)imidazole-4-carboxamide + L-glutamine = D-erythro-1-(imidazol-4-yl)glycerol 3-phosphate + 5-amino-1-(5-phospho-beta-D-ribosyl)imidazole-4-carboxamide + L-glutamate + H(+). It functions in the pathway amino-acid biosynthesis; L-histidine biosynthesis; L-histidine from 5-phospho-alpha-D-ribose 1-diphosphate: step 5/9. Functionally, IGPS catalyzes the conversion of PRFAR and glutamine to IGP, AICAR and glutamate. The HisF subunit catalyzes the cyclization activity that produces IGP and AICAR from PRFAR using the ammonia provided by the HisH subunit. The chain is Imidazole glycerol phosphate synthase subunit HisF from Prochlorococcus marinus subsp. pastoris (strain CCMP1986 / NIES-2087 / MED4).